The sequence spans 278 residues: Checkpoint protein HUS1B (278 aa).

The protein belongs to the HUS1 family. In terms of assembly, interacts with RAD1 and RAD9B. In terms of tissue distribution, expressed strongly in testis, less in spleen, thymus, prostate, colon and leukocytes.

In Homo sapiens (Human), this protein is Checkpoint protein HUS1B (HUS1B).